Here is a 340-residue protein sequence, read N- to C-terminus: UPF0284 protein Saci_0020 (340 aa).

This sequence belongs to the UPF0284 family.

This Sulfolobus acidocaldarius (strain ATCC 33909 / DSM 639 / JCM 8929 / NBRC 15157 / NCIMB 11770) protein is UPF0284 protein Saci_0020.